A 209-amino-acid polypeptide reads, in one-letter code: Uracil phosphoribosyltransferase (209 aa).

5-phospho-alpha-D-ribose 1-diphosphate-binding positions include R79, R104, and 131–139 (DPMLATGGS). Uracil-binding positions include I194 and 199-201 (GDA). D200 contacts 5-phospho-alpha-D-ribose 1-diphosphate.

The protein belongs to the UPRTase family. It depends on Mg(2+) as a cofactor.

It catalyses the reaction UMP + diphosphate = 5-phospho-alpha-D-ribose 1-diphosphate + uracil. It participates in pyrimidine metabolism; UMP biosynthesis via salvage pathway; UMP from uracil: step 1/1. Its activity is regulated as follows. Allosterically activated by GTP. Functionally, catalyzes the conversion of uracil and 5-phospho-alpha-D-ribose 1-diphosphate (PRPP) to UMP and diphosphate. The chain is Uracil phosphoribosyltransferase from Clostridium kluyveri (strain NBRC 12016).